The primary structure comprises 131 residues: Large-conductance mechanosensitive channel (131 aa).

3 helical membrane passes run 8–28 (FALKGNVLDLAVGVIIGGAFG), 30–50 (IVTSLVNDIIMPILGLVVGGI), and 72–92 (GQFIQTTFDFLIIAFSIFMFI).

Belongs to the MscL family. As to quaternary structure, homopentamer.

Its subcellular location is the cell membrane. Functionally, channel that opens in response to stretch forces in the membrane lipid bilayer. May participate in the regulation of osmotic pressure changes within the cell. The polypeptide is Large-conductance mechanosensitive channel (Alkaliphilus oremlandii (strain OhILAs) (Clostridium oremlandii (strain OhILAs))).